The sequence spans 183 residues: Transmembrane protein 52B (183 aa).

The signal sequence occupies residues 1–24; the sequence is MGVRVHVVAASALLYFILLSGTRC. Residues 40-60 traverse the membrane as a helical segment; sequence VHLWYIWLLVVIGALLLLCGL. The disordered stretch occupies residues 158–183; it reads DLPPVPEEKQLPPTEKESTRIVDSWN. Residues 163–177 are compositionally biased toward basic and acidic residues; sequence PEEKQLPPTEKESTR.

The protein localises to the membrane. In Homo sapiens (Human), this protein is Transmembrane protein 52B (TMEM52B).